Here is a 69-residue protein sequence, read N- to C-terminus: Conotoxin Eb6.19 (69 aa).

The signal sequence occupies residues 1–17; sequence VLIIAVLFLTACQLTTA. A propeptide spanning residues 18-41 is cleaved from the precursor; it reads ETYSRGRQKHRARRSTDKNSKWTR. Intrachain disulfides connect Cys43-Cys57, Cys50-Cys61, and Cys56-Cys68.

It belongs to the conotoxin O1 superfamily. As to expression, expressed by the venom duct.

It localises to the secreted. The chain is Conotoxin Eb6.19 (E1) from Conus ebraeus (Hebrew cone).